Reading from the N-terminus, the 339-residue chain is Proto-oncogene serine/threonine-protein kinase mos (339 aa).

Positions 61–335 (VCLLHRLGSG…LLQKDLKAFR (275 aa)) constitute a Protein kinase domain. ATP-binding positions include 67–75 (LGSGGFGSV) and K88. Catalysis depends on D196, which acts as the Proton acceptor.

The protein belongs to the protein kinase superfamily. Ser/Thr protein kinase family. As to quaternary structure, interacts with MAP2K1/MEK1. Expressed mainly in gonadal tissues, and cardiac and skeletal muscles.

The protein resides in the cytoplasm. The catalysed reaction is L-seryl-[protein] + ATP = O-phospho-L-seryl-[protein] + ADP + H(+). It catalyses the reaction L-threonyl-[protein] + ATP = O-phospho-L-threonyl-[protein] + ADP + H(+). In terms of biological role, serine/threonine kinase involved in the regulation of MAPK signaling. Is an activator of the ERK1/2 signaling cascade playing an essential role in the stimulation of oocyte maturation. The protein is Proto-oncogene serine/threonine-protein kinase mos of Rattus norvegicus (Rat).